A 192-amino-acid polypeptide reads, in one-letter code: Fe/S biogenesis protein NfuA (192 aa).

The [4Fe-4S] cluster site is built by Cys149 and Cys152.

The protein belongs to the NfuA family. Homodimer. [4Fe-4S] cluster is required as a cofactor.

Involved in iron-sulfur cluster biogenesis. Binds a 4Fe-4S cluster, can transfer this cluster to apoproteins, and thereby intervenes in the maturation of Fe/S proteins. Could also act as a scaffold/chaperone for damaged Fe/S proteins. This chain is Fe/S biogenesis protein NfuA, found in Shewanella pealeana (strain ATCC 700345 / ANG-SQ1).